The following is a 311-amino-acid chain: Pyrimidine-specific ribonucleoside hydrolase RihA (311 aa).

The active site involves histidine 240.

The protein belongs to the IUNH family. RihA subfamily.

Functionally, hydrolyzes cytidine or uridine to ribose and cytosine or uracil, respectively. The sequence is that of Pyrimidine-specific ribonucleoside hydrolase RihA from Salmonella dublin (strain CT_02021853).